The chain runs to 134 residues: ATP synthase epsilon chain (134 aa).

This sequence belongs to the ATPase epsilon chain family. As to quaternary structure, F-type ATPases have 2 components, CF(1) - the catalytic core - and CF(0) - the membrane proton channel. CF(1) has five subunits: alpha(3), beta(3), gamma(1), delta(1), epsilon(1). CF(0) has three main subunits: a, b and c.

It localises to the cell inner membrane. Produces ATP from ADP in the presence of a proton gradient across the membrane. The sequence is that of ATP synthase epsilon chain from Rhizobium meliloti (strain 1021) (Ensifer meliloti).